Here is a 122-residue protein sequence, read N- to C-terminus: Large ribosomal subunit protein uL22 (122 aa).

This sequence belongs to the universal ribosomal protein uL22 family. In terms of assembly, part of the 50S ribosomal subunit.

Functionally, this protein binds specifically to 23S rRNA; its binding is stimulated by other ribosomal proteins, e.g. L4, L17, and L20. It is important during the early stages of 50S assembly. It makes multiple contacts with different domains of the 23S rRNA in the assembled 50S subunit and ribosome. Its function is as follows. The globular domain of the protein is located near the polypeptide exit tunnel on the outside of the subunit, while an extended beta-hairpin is found that lines the wall of the exit tunnel in the center of the 70S ribosome. The sequence is that of Large ribosomal subunit protein uL22 from Caldicellulosiruptor saccharolyticus (strain ATCC 43494 / DSM 8903 / Tp8T 6331).